We begin with the raw amino-acid sequence, 397 residues long: MTTGSKAKRRLTILGSTGSIGQNTLDVIAQLGGRDAFEIAAITGHDNIDLLASQAKACGAALAVTANEDRYQALKDALAGTGIAAAAGRNALIEAASIPSDWVMAAIVGTAGLAPTLEAARRGADIALANKECLVSAGDLFVRAVAEGGGRLIPVDSEHSAIFQALEDDQQHAVERIILTASGGPFRTWSREQMANVTPATARAHPNWSMGFKISIGSASMFNKALEMIEAKHLFNVRPEQIEVVVHPQSVIHSMVGYTDGSVLAQLGCPDMRTAIGYALTYPSRTKLDVERLDFTKLARLDFEAPDEVRFPALRLARTAMERGGLQGAIMNAAEEIAFHAFVDGRIGFLEMADIAEAVMDQMIATGTAETMDAVFAADEEARRRAGVLVAQREKAA.

NADPH is bound by residues threonine 17, glycine 18, serine 19, isoleucine 20, asparagine 47, and asparagine 130. Residue lysine 131 participates in 1-deoxy-D-xylulose 5-phosphate binding. Glutamate 132 contacts NADPH. Aspartate 156 provides a ligand contact to Mn(2+). 1-deoxy-D-xylulose 5-phosphate is bound by residues serine 157, glutamate 158, serine 182, and histidine 205. Glutamate 158 lines the Mn(2+) pocket. Glycine 211 is a binding site for NADPH. Residues serine 218, asparagine 223, lysine 224, and glutamate 227 each contribute to the 1-deoxy-D-xylulose 5-phosphate site. Glutamate 227 is a Mn(2+) binding site.

This sequence belongs to the DXR family. Mg(2+) is required as a cofactor. The cofactor is Mn(2+).

The enzyme catalyses 2-C-methyl-D-erythritol 4-phosphate + NADP(+) = 1-deoxy-D-xylulose 5-phosphate + NADPH + H(+). The protein operates within isoprenoid biosynthesis; isopentenyl diphosphate biosynthesis via DXP pathway; isopentenyl diphosphate from 1-deoxy-D-xylulose 5-phosphate: step 1/6. Catalyzes the NADPH-dependent rearrangement and reduction of 1-deoxy-D-xylulose-5-phosphate (DXP) to 2-C-methyl-D-erythritol 4-phosphate (MEP). The chain is 1-deoxy-D-xylulose 5-phosphate reductoisomerase from Rhizobium rhizogenes (strain K84 / ATCC BAA-868) (Agrobacterium radiobacter).